The following is a 468-amino-acid chain: Factor XIIa inhibitor (468 aa).

The N-terminal stretch at 1 to 23 (MASRLTPLTLLLLLLLAGDRVTS) is a signal peptide. Positions 27–60 (VGPGNLQEGESEGDSQKGGILDGESIQGNEDSPT) are disordered. 4 N-linked (GlcNAc...) asparagine glycosylation sites follow: Asn-65, Asn-176, Asn-227, and Asn-326. 2 disulfides stabilise this stretch: Cys-97/Cys-396 and Cys-104/Cys-179.

It belongs to the serpin family. N- and O-glycosylated.

It is found in the secreted. In terms of biological role, may play a potentially crucial role in regulating important physiological pathways including complement activation, blood coagulation, fibrinolysis and the generation of kinins. This chain is Factor XIIa inhibitor, found in Bos taurus (Bovine).